The following is a 329-amino-acid chain: 4-hydroxythreonine-4-phosphate dehydrogenase (329 aa).

Residues histidine 136 and threonine 137 each coordinate substrate. Residues histidine 166, histidine 211, and histidine 266 each coordinate a divalent metal cation. Residues lysine 274, asparagine 283, and arginine 292 each coordinate substrate.

It belongs to the PdxA family. As to quaternary structure, homodimer. Zn(2+) is required as a cofactor. Requires Mg(2+) as cofactor. Co(2+) serves as cofactor.

The protein resides in the cytoplasm. It catalyses the reaction 4-(phosphooxy)-L-threonine + NAD(+) = 3-amino-2-oxopropyl phosphate + CO2 + NADH. It participates in cofactor biosynthesis; pyridoxine 5'-phosphate biosynthesis; pyridoxine 5'-phosphate from D-erythrose 4-phosphate: step 4/5. Catalyzes the NAD(P)-dependent oxidation of 4-(phosphooxy)-L-threonine (HTP) into 2-amino-3-oxo-4-(phosphooxy)butyric acid which spontaneously decarboxylates to form 3-amino-2-oxopropyl phosphate (AHAP). This chain is 4-hydroxythreonine-4-phosphate dehydrogenase, found in Salmonella typhi.